The following is a 460-amino-acid chain: UDP-N-acetylmuramate--L-alanine ligase (460 aa).

ATP is bound at residue 116 to 122 (GSHGKTT).

The protein belongs to the MurCDEF family.

Its subcellular location is the cytoplasm. It catalyses the reaction UDP-N-acetyl-alpha-D-muramate + L-alanine + ATP = UDP-N-acetyl-alpha-D-muramoyl-L-alanine + ADP + phosphate + H(+). It functions in the pathway cell wall biogenesis; peptidoglycan biosynthesis. Cell wall formation. This is UDP-N-acetylmuramate--L-alanine ligase from Caldanaerobacter subterraneus subsp. tengcongensis (strain DSM 15242 / JCM 11007 / NBRC 100824 / MB4) (Thermoanaerobacter tengcongensis).